Here is a 292-residue protein sequence, read N- to C-terminus: MNPLWSMSSGSVRKRAEGEEKTLAGDVKTSPPRSAPKKQLPSIPKNALPISKPTSPAPAAQSTNGTHASYGPFYLEYSLLAEFTMVVKQKLPGVYVQPSYRSALVWFGVIFIRHGLYQDGVFKFTVYIPDNYPDGDCPRLLFDIPVFHPLVDPTSGELDVKRAFAKWRRNHNHIWQVLMYARRVFYKIDTTSPLNPEAAVLYEKDIQLFKSKVVDSVKVCTARLFDQPKIEDPYAISFSPWNPSVHDEAREKMLTQKKPDEQHNKSVHVAGLSWVKPGSVQPFSKEEKTVAT.

Residues 1 to 11 (MNPLWSMSSGS) are compositionally biased toward polar residues. Residues 1-64 (MNPLWSMSSG…SPAPAAQSTN (64 aa)) are disordered. Basic and acidic residues predominate over residues 14-23 (KRAEGEEKTL). Ser30 bears the Phosphoserine mark. The UBC core domain occupies 74-222 (YLEYSLLAEF…VVDSVKVCTA (149 aa)).

Belongs to the ubiquitin-conjugating enzyme family. FTS subfamily. Component of the FTS/Hook/FHIP complex (FHF complex), composed of AKTIP/FTS, FHIP1B, and one or more members of the Hook family of proteins HOOK1, HOOK2, and HOOK3. Interacts directly with HOOK1, HOOK2 and HOOK3. The FHF complex associates with the homotypic vesicular sorting complex (the HOPS complex). Also interacts with AKT1. May interact with FHIP1A.

Its subcellular location is the cytoplasm. It is found in the cell membrane. In terms of biological role, component of the FTS/Hook/FHIP complex (FHF complex). The FHF complex may function to promote vesicle trafficking and/or fusion via the homotypic vesicular protein sorting complex (the HOPS complex). Regulates apoptosis by enhancing phosphorylation and activation of AKT1. Increases release of TNFSF6 via the AKT1/GSK3B/NFATC1 signaling cascade. FHF complex promotes the distribution of AP-4 complex to the perinuclear area of the cell. This is AKT-interacting protein (Aktip) from Rattus norvegicus (Rat).